Here is a 345-residue protein sequence, read N- to C-terminus: tRNA N6-adenosine threonylcarbamoyltransferase (345 aa).

Fe cation is bound by residues histidine 111 and histidine 115. Residues 134–138, aspartate 167, glycine 180, and asparagine 277 contribute to the substrate site; that span reads LVSGG. Aspartate 305 provides a ligand contact to Fe cation.

This sequence belongs to the KAE1 / TsaD family. Requires Fe(2+) as cofactor.

It localises to the cytoplasm. It catalyses the reaction L-threonylcarbamoyladenylate + adenosine(37) in tRNA = N(6)-L-threonylcarbamoyladenosine(37) in tRNA + AMP + H(+). Its function is as follows. Required for the formation of a threonylcarbamoyl group on adenosine at position 37 (t(6)A37) in tRNAs that read codons beginning with adenine. Is involved in the transfer of the threonylcarbamoyl moiety of threonylcarbamoyl-AMP (TC-AMP) to the N6 group of A37, together with TsaE and TsaB. TsaD likely plays a direct catalytic role in this reaction. In Laribacter hongkongensis (strain HLHK9), this protein is tRNA N6-adenosine threonylcarbamoyltransferase.